A 207-amino-acid polypeptide reads, in one-letter code: Ribosomal RNA large subunit methyltransferase E (207 aa).

Glycine 60, tryptophan 62, aspartate 80, aspartate 96, and aspartate 121 together coordinate S-adenosyl-L-methionine. Residue lysine 161 is the Proton acceptor of the active site.

It belongs to the class I-like SAM-binding methyltransferase superfamily. RNA methyltransferase RlmE family.

The protein localises to the cytoplasm. The catalysed reaction is uridine(2552) in 23S rRNA + S-adenosyl-L-methionine = 2'-O-methyluridine(2552) in 23S rRNA + S-adenosyl-L-homocysteine + H(+). Specifically methylates the uridine in position 2552 of 23S rRNA at the 2'-O position of the ribose in the fully assembled 50S ribosomal subunit. The protein is Ribosomal RNA large subunit methyltransferase E of Ectopseudomonas mendocina (strain ymp) (Pseudomonas mendocina).